We begin with the raw amino-acid sequence, 399 residues long: Octopine dehydrogenase (399 aa).

NADH contacts are provided by residues 10 to 13 (GGNG) and 35 to 38 (FADE). Residues Gln118 and Thr143 each coordinate pyruvate. Gln118 contacts substrate. Cys148 is an NAD(+) binding site. Residue Met206 coordinates L-arginine. His212 is a pyruvate binding site. The active site involves His212. Arg324 is a binding site for NAD(+).

Belongs to the lysopine/nopaline/octopine/opine/vitopine dehydrogenases family.

It catalyses the reaction D-octopine + NAD(+) + H2O = L-arginine + pyruvate + NADH + H(+). With respect to regulation, agmatine acts as a competitive inhibitor of the condensation reaction where the L-arginine and agmatine substrates compete for the same site. Functionally, catalyzes the reverse reaction of octopine dehydrogenation. Acts on L-arginine in preference to other substrates such as canavanine, cysteine, L-alanine, ornithine or norvaline, owing to the presence of the positively charged guanidium group. The chain is Octopine dehydrogenase from Pecten maximus (King scallop).